Here is a 555-residue protein sequence, read N- to C-terminus: Phosphoglucomutase (555 aa).

Alpha-D-glucose 1,6-bisphosphate contacts are provided by Arg-22 and Ser-114. The Phosphoserine intermediate role is filled by Ser-114. Mg(2+) contacts are provided by Ser-114, Asp-279, Asp-281, and Asp-283. Ser-114 is modified (phosphoserine). Positions 283, 284, 347, 366, 368, and 379 each coordinate alpha-D-glucose 1,6-bisphosphate.

It belongs to the phosphohexose mutase family. As to quaternary structure, monomer. Mg(2+) serves as cofactor.

The protein resides in the cytoplasm. The enzyme catalyses alpha-D-glucose 1-phosphate = alpha-D-glucose 6-phosphate. It carries out the reaction O-phospho-L-seryl-[protein] + alpha-D-glucose 1-phosphate = alpha-D-glucose 1,6-bisphosphate + L-seryl-[protein]. The catalysed reaction is alpha-D-glucose 1,6-bisphosphate + L-seryl-[protein] = O-phospho-L-seryl-[protein] + alpha-D-glucose 6-phosphate. Its function is as follows. Catalyzes the reversible isomerization of alpha-D-glucose 1-phosphate to alpha-D-glucose 6-phosphate. The mechanism proceeds via the intermediate compound alpha-D-glucose 1,6-bisphosphate. Key enzyme in hexose metabolism. The reverse reaction is an essential step for biosynthesis because glucose 1-phosphate is the starting point for the synthesis of UDP-glucose, which acts as a precursor for the synthesis of oligosaccharides and trehalose. This Aspergillus oryzae (strain ATCC 42149 / RIB 40) (Yellow koji mold) protein is Phosphoglucomutase (pgmA).